A 280-amino-acid chain; its full sequence is Homeobox protein Hox-B1b (280 aa).

Residues 46–65 (GRLAAPTSAPHQSPGLPLHH) are disordered. The short motif at 170–175 (TFDWMK) is the Antp-type hexapeptide element. A DNA-binding region (homeobox) is located at residues 195–254 (HNVIRTNFTTKQLTELEKEFHFNKYLTRARRVEVAASLELNETQVKIWFQNRRMKQKKRE). A disordered region spans residues 249-280 (KQKKREKLGGVLVHREKASGPESSPKAKESEP). The span at 261-280 (VHREKASGPESSPKAKESEP) shows a compositional bias: basic and acidic residues.

It belongs to the Antp homeobox family. Labial subfamily.

The protein resides in the nucleus. In terms of biological role, sequence-specific transcription factor which is part of a developmental regulatory system that provides cells with specific positional identities on the anterior-posterior axis. The sequence is that of Homeobox protein Hox-B1b (hoxb1b) from Takifugu rubripes (Japanese pufferfish).